A 346-amino-acid chain; its full sequence is Dihydroorotate dehydrogenase (quinone) (346 aa).

Residues 62–66 and Thr86 each bind FMN; that span reads AGMDK. Lys66 serves as a coordination point for substrate. 111–115 is a substrate binding site; it reads NRMGF. Residues Asn142 and Asn175 each contribute to the FMN site. Asn175 is a substrate binding site. Ser178 functions as the Nucleophile in the catalytic mechanism. Residue Asn180 coordinates substrate. FMN contacts are provided by Lys211 and Val239. Position 240–241 (240–241) interacts with substrate; sequence NT. FMN is bound by residues Gly261, Gly289, and 310 to 311; that span reads YT.

This sequence belongs to the dihydroorotate dehydrogenase family. Type 2 subfamily. In terms of assembly, monomer. FMN is required as a cofactor.

Its subcellular location is the cell membrane. The enzyme catalyses (S)-dihydroorotate + a quinone = orotate + a quinol. The protein operates within pyrimidine metabolism; UMP biosynthesis via de novo pathway; orotate from (S)-dihydroorotate (quinone route): step 1/1. Catalyzes the conversion of dihydroorotate to orotate with quinone as electron acceptor. This Thermus thermophilus (strain ATCC BAA-163 / DSM 7039 / HB27) protein is Dihydroorotate dehydrogenase (quinone).